Here is a 382-residue protein sequence, read N- to C-terminus: Mannitol-1-phosphate 5-dehydrogenase (382 aa).

3–14 (ALHFGAGNIGRG) lines the NAD(+) pocket.

Belongs to the mannitol dehydrogenase family.

The enzyme catalyses D-mannitol 1-phosphate + NAD(+) = beta-D-fructose 6-phosphate + NADH + H(+). The chain is Mannitol-1-phosphate 5-dehydrogenase from Salmonella paratyphi A (strain ATCC 9150 / SARB42).